The primary structure comprises 161 residues: Cyclic pyranopterin monophosphate synthase (161 aa).

Residues Leu78–His80 and Met116–Glu117 each bind substrate. The active site involves Asp131.

The protein belongs to the MoaC family. Homohexamer; trimer of dimers.

The enzyme catalyses (8S)-3',8-cyclo-7,8-dihydroguanosine 5'-triphosphate = cyclic pyranopterin phosphate + diphosphate. Its pathway is cofactor biosynthesis; molybdopterin biosynthesis. Its function is as follows. Catalyzes the conversion of (8S)-3',8-cyclo-7,8-dihydroguanosine 5'-triphosphate to cyclic pyranopterin monophosphate (cPMP). The chain is Cyclic pyranopterin monophosphate synthase from Bordetella parapertussis (strain 12822 / ATCC BAA-587 / NCTC 13253).